The chain runs to 70 residues: Cecropin-P1 (70 aa).

Positions methionine 1 to serine 13 are cleaved as a signal peptide. The propeptide at arginine 45–valine 70 is removed in mature form.

Expressed in the body wall, intestine, uterus and ovary.

The protein localises to the secreted. In terms of biological role, has antibacterial activity against several Gram-positive and Gram-negative bacteria. Is weakly active against yeasts. Acts by a nonpore mechanism. In Ascaris suum (Pig roundworm), this protein is Cecropin-P1 (ASCEC-1).